The following is a 207-amino-acid chain: MARCKS-related protein 1-B (207 aa).

Low complexity-rich tracts occupy residues 1–25 and 63–77; these read MGSQ…AAVK and AGAG…AAEG. The interval 1–207 is disordered; it reads MGSQASKGGV…STPAPSEQKE (207 aa). The N-myristoyl glycine moiety is linked to residue G2. Residues 78 to 90 show a composition bias toward basic and acidic residues; sequence EAAKPEGEATKET. An effector domain involved in lipid-binding region spans residues 93 to 116; it reads KKKKKFSLKNSFKFKGISLKKSKK. The segment covering 100–109 has biased composition (low complexity); it reads LKNSFKFKGI. 2 stretches are compositionally biased toward basic and acidic residues: residues 131-154 and 163-182; these read TEEK…KAEE and PKAE…KEEA. The span at 195–207 shows a compositional bias: polar residues; sequence ETNSTPAPSEQKE.

It belongs to the MARCKS family. As to expression, strongly expressed in brain and eye. Also detected at lower levels in muscle.

The protein localises to the cytoplasm. The protein resides in the cytoskeleton. Its subcellular location is the cell membrane. Functionally, involved in the control of cell movement by regulating actin cytoskeleton homeostasis and filopodium and lamellipodium formation. The chain is MARCKS-related protein 1-B from Danio rerio (Zebrafish).